Here is a 291-residue protein sequence, read N- to C-terminus: Proline iminopeptidase (291 aa).

Positions 30–274 (LLIHGGPGSS…ANSRHLALLD (245 aa)) constitute an AB hydrolase-1 domain. S103 serves as the catalytic Nucleophile. D242 is an active-site residue. H269 acts as the Proton donor in catalysis.

Belongs to the peptidase S33 family.

The protein localises to the cell envelope. The enzyme catalyses Release of N-terminal proline from a peptide.. Releases the N-terminal proline from various substrates. This chain is Proline iminopeptidase, found in Lacticaseibacillus rhamnosus (strain Lc 705) (Lactobacillus rhamnosus).